Consider the following 204-residue polypeptide: uncharacterized protein (204 aa).

It localises to the cytoplasm. Its subcellular location is the nucleus. This is an uncharacterized protein from Schizosaccharomyces pombe (strain 972 / ATCC 24843) (Fission yeast).